Reading from the N-terminus, the 395-residue chain is uncharacterized protein (395 aa).

The next 10 membrane-spanning stretches (helical) occupy residues 19–39, 49–69, 87–107, 137–157, 172–192, 206–226, 252–272, 279–299, 311–331, and 359–379; these read IGIASLIGIVGGLSSVIIAII, VLLIPIVFFIAGLFVDYIYEL, LTWIRGLLKVLLAGAVIAVGG, LVIITGIAGGLGGAFSAPLGT, YINLIPPIIASVVGYLIFYLI, TINIHDFLLFILGAFFCSLIA, LIGGILVAVISYFIPEVMGMG, LFIMEFSLVFLVLLLIGKILA, GLVFPSMCIGAISGIIFGSLI, and VLCTEIFGFDFAVPASIGAVI.

The protein belongs to the chloride channel (TC 2.A.49) family.

It localises to the cell membrane. This is an uncharacterized protein from Methanocaldococcus jannaschii (strain ATCC 43067 / DSM 2661 / JAL-1 / JCM 10045 / NBRC 100440) (Methanococcus jannaschii).